A 140-amino-acid polypeptide reads, in one-letter code: HTH-type transcriptional regulator YfmP (140 aa).

The HTH merR-type domain maps to 1-73; that stretch reads MEWMKIDQVA…LQELQHFMET (73 aa). The H-T-H motif DNA-binding region spans 6-25; it reads IDQVAKRSGLTKRTIRFYEE.

Its function is as follows. Repressor of the yfmOP operon. A mutation in yfmP leads to overexpression of yfmO, probably causing a decrease in cellular copper that is eventually responsible for a reduced copper induction of copZA. The protein is HTH-type transcriptional regulator YfmP (yfmP) of Bacillus subtilis (strain 168).